The primary structure comprises 326 residues: tRNA uridine(34) hydroxylase (326 aa).

The Rhodanese domain occupies 123-217 (SDPDVLLVDT…YLEEVKQEES (95 aa)). Catalysis depends on cysteine 177, which acts as the Cysteine persulfide intermediate. Residues 304–326 (VSQVILSRRTEKEDQRQAQNKKA) form a disordered region.

Belongs to the TrhO family.

It catalyses the reaction uridine(34) in tRNA + AH2 + O2 = 5-hydroxyuridine(34) in tRNA + A + H2O. Catalyzes oxygen-dependent 5-hydroxyuridine (ho5U) modification at position 34 in tRNAs. The sequence is that of tRNA uridine(34) hydroxylase from Shewanella sediminis (strain HAW-EB3).